The following is a 304-amino-acid chain: tRNA pseudouridine synthase B (304 aa).

The active-site Nucleophile is Asp-44.

The protein belongs to the pseudouridine synthase TruB family. Type 1 subfamily.

It carries out the reaction uridine(55) in tRNA = pseudouridine(55) in tRNA. In terms of biological role, responsible for synthesis of pseudouridine from uracil-55 in the psi GC loop of transfer RNAs. This Novosphingobium aromaticivorans (strain ATCC 700278 / DSM 12444 / CCUG 56034 / CIP 105152 / NBRC 16084 / F199) protein is tRNA pseudouridine synthase B.